Reading from the N-terminus, the 472-residue chain is Membrane-bound acylglycerophosphatidylinositol O-acyltransferase MBOAT7 (472 aa).

Residues 1–5 (MSPEE) lie on the Cytoplasmic side of the membrane. A helical membrane pass occupies residues 6-22 (WTYLVVLLISIPIGFLF). The Lumenal segment spans residues 23 to 33 (KKAGPGLKRWG). A helical membrane pass occupies residues 34 to 57 (AAAVGLGLTLFTCGPHTLHSLVTI). Topologically, residues 58–73 (LGTWALIQAQPCSCHA) are cytoplasmic. The chain crosses the membrane as a helical span at residues 74 to 93 (LALAWTFSYLLFFRALSLLG). The Lumenal segment spans residues 94-194 (LPTPTPFTNA…VPSLRPLLRR (101 aa)). Residues 195–212 (AWPAPLFGLLFLLSSHLF) form a helical membrane-spanning segment. Residues 213 to 231 (PLEAVREDAFYARPLPARL) lie on the Cytoplasmic side of the membrane. The helical transmembrane segment at 232–261 (FYMIPVFFAFRMRFYVAWIAAECGCIAAGF) threads the bilayer. At 262–426 (GAYPVAAKAR…LSLRDTLRYW (165 aa)) the chain is on the lumenal side. The N-linked (GlcNAc...) asparagine glycan is linked to N321. A helical transmembrane segment spans residues 427–447 (ASVYFCVHVLALAALGLGLAL). At 448-472 (GRGGPGRRKSGAPAPSPASGKLREE) the chain is on the cytoplasmic side. The interval 450–472 (GGPGRRKSGAPAPSPASGKLREE) is disordered.

The protein belongs to the membrane-bound acyltransferase family. In terms of assembly, interacts with SPTSSA; the interaction facilitates MBOAT7 location to mitochondria-associated membranes (MAMs).

The protein resides in the endoplasmic reticulum membrane. It carries out the reaction a 1-acyl-sn-glycero-3-phospho-(1D-myo-inositol) + an acyl-CoA = a 1,2-diacyl-sn-glycero-3-phospho-(1D-myo-inositol) + CoA. The catalysed reaction is a 1-acyl-sn-glycero-3-phospho-(1D-myo-inositol) + (5Z,8Z,11Z,14Z)-eicosatetraenoyl-CoA = a 1-acyl-2-(5Z,8Z,11Z,14Z-eicosatetraenoyl)-sn-glycero-3-phospho-(1D-myo-inositol) + CoA. The enzyme catalyses (5Z,8Z,11Z,14Z)-eicosatetraenoyl-CoA + 1-hexadecanoyl-sn-glycero-3-phosphocholine = 1-hexadecanoyl-2-(5Z,8Z,11Z,14Z-eicosatetraenoyl)-sn-glycero-3-phosphocholine + CoA. It catalyses the reaction 1-octadecanoyl-sn-glycero-3-phospho-(1D-myo-inositol) + (5Z,8Z,11Z,14Z)-eicosatetraenoyl-CoA = 1-octadecanoyl-2-(5Z,8Z,11Z,14Z-eicosatetraenoyl)-sn-glycero-3-phospho-(1D-myo-inositol) + CoA. The protein operates within lipid metabolism; phospholipid metabolism. In terms of biological role, acyltransferase which catalyzes the transfer of an acyl group from an acyl-CoA to a lysophosphatidylinositol (1-acylglycerophosphatidylinositol or LPI) leading to the production of a phosphatidylinositol (1,2-diacyl-sn-glycero-3-phosphoinositol or PI) and participates in the reacylation step of the phospholipid remodeling pathway also known as the Lands cycle. Prefers arachidonoyl-CoA as the acyl donor, thus contributing to the regulation of free levels arachidonic acid in cell. In liver, participates in the regulation of triglyceride metabolism through the phosphatidylinositol acyl-chain remodeling regulation. This chain is Membrane-bound acylglycerophosphatidylinositol O-acyltransferase MBOAT7 (MBOAT7), found in Bos taurus (Bovine).